We begin with the raw amino-acid sequence, 111 residues long: uncharacterized protein (111 aa).

Helical transmembrane passes span 22–42, 48–68, and 75–95; these read ASLI…ANIT, LTPA…VSVL, and VLVT…PKIL.

It localises to the membrane. This is an uncharacterized protein from Saccharomyces cerevisiae (strain ATCC 204508 / S288c) (Baker's yeast).